The chain runs to 513 residues: NAD(P)H-quinone oxidoreductase subunit 2 (513 aa).

14 consecutive transmembrane segments (helical) span residues 15 to 35 (VIWPEGILIITLMVILIGDLI), 43 to 63 (WLPYVAIAGLLAAVVALYFTW), 80 to 100 (LSIVFRAIIALSTASTVLMSI), 110 to 130 (LAEFLAIMLTATLGGMFLSGA), 133 to 153 (LVMIFISLEMLSISSYLMTGY), 168 to 188 (LLIGASSSAIFLYGVSLLYGL), 211 to 231 (LALAIALVFVIAGIAFKISAV), 245 to 265 (PTPVVAFLSVGSKAAGFALAI), 281 to 301 (FIFIALAILSMILGNVVALAQ), 307 to 327 (MLAYSSIGQAGFVMIGLTAGT), 335 to 355 (IFYLLIYLFMNLGAFACVILF), 379 to 399 (LCLSICLLSLGGIPPLAGFFG), 401 to 421 (IYLFWAGWQAGLYALVLVGLV), and 467 to 487 (VGIVLSLVATSLAGILSNPLF).

This sequence belongs to the complex I subunit 2 family. As to quaternary structure, NDH-1 can be composed of about 15 different subunits; different subcomplexes with different compositions have been identified which probably have different functions.

The protein resides in the cellular thylakoid membrane. The catalysed reaction is a plastoquinone + NADH + (n+1) H(+)(in) = a plastoquinol + NAD(+) + n H(+)(out). The enzyme catalyses a plastoquinone + NADPH + (n+1) H(+)(in) = a plastoquinol + NADP(+) + n H(+)(out). Its function is as follows. NDH-1 shuttles electrons from an unknown electron donor, via FMN and iron-sulfur (Fe-S) centers, to quinones in the respiratory and/or the photosynthetic chain. The immediate electron acceptor for the enzyme in this species is believed to be plastoquinone. Couples the redox reaction to proton translocation, and thus conserves the redox energy in a proton gradient. Cyanobacterial NDH-1 also plays a role in inorganic carbon-concentration. The protein is NAD(P)H-quinone oxidoreductase subunit 2 of Microcystis aeruginosa (strain NIES-843 / IAM M-2473).